The following is a 161-amino-acid chain: uncharacterized protein (161 aa).

This is an uncharacterized protein from Homo sapiens (Human).